The primary structure comprises 310 residues: DnaJ-like protein MG002 (310 aa).

The 66-residue stretch at 1-66 folds into the J domain; that stretch reads MNLYDLLELP…KEKYDSMLKV (66 aa).

This chain is DnaJ-like protein MG002, found in Mycoplasma genitalium (strain ATCC 33530 / DSM 19775 / NCTC 10195 / G37) (Mycoplasmoides genitalium).